A 152-amino-acid chain; its full sequence is Ribosome maturation factor RimP (152 aa).

Belongs to the RimP family.

The protein localises to the cytoplasm. Required for maturation of 30S ribosomal subunits. This is Ribosome maturation factor RimP from Yersinia pestis.